Here is a 299-residue protein sequence, read N- to C-terminus: tRNA dimethylallyltransferase (299 aa).

Residue 10 to 17 (GATATGKS) participates in ATP binding. 12-17 (TATGKS) contributes to the substrate binding site. Positions 35 to 38 (DSRQ) are interaction with substrate tRNA.

Belongs to the IPP transferase family. Monomer. It depends on Mg(2+) as a cofactor.

The catalysed reaction is adenosine(37) in tRNA + dimethylallyl diphosphate = N(6)-dimethylallyladenosine(37) in tRNA + diphosphate. Functionally, catalyzes the transfer of a dimethylallyl group onto the adenine at position 37 in tRNAs that read codons beginning with uridine, leading to the formation of N6-(dimethylallyl)adenosine (i(6)A). The sequence is that of tRNA dimethylallyltransferase from Rippkaea orientalis (strain PCC 8801 / RF-1) (Cyanothece sp. (strain PCC 8801)).